The primary structure comprises 334 residues: Probable N5-carboxyaminoimidazole ribonucleotide mutase (334 aa).

Substrate-binding residues include Ser-11, Asp-14, and Arg-41.

This sequence belongs to the AIR carboxylase family. Class I subfamily.

The enzyme catalyses 5-carboxyamino-1-(5-phospho-D-ribosyl)imidazole + H(+) = 5-amino-1-(5-phospho-D-ribosyl)imidazole-4-carboxylate. It functions in the pathway purine metabolism; IMP biosynthesis via de novo pathway; 5-amino-1-(5-phospho-D-ribosyl)imidazole-4-carboxylate from 5-amino-1-(5-phospho-D-ribosyl)imidazole (N5-CAIR route): step 2/2. Catalyzes the conversion of N5-carboxyaminoimidazole ribonucleotide (N5-CAIR) to 4-carboxy-5-aminoimidazole ribonucleotide (CAIR). In Methanothermobacter thermautotrophicus (strain ATCC 29096 / DSM 1053 / JCM 10044 / NBRC 100330 / Delta H) (Methanobacterium thermoautotrophicum), this protein is Probable N5-carboxyaminoimidazole ribonucleotide mutase.